The chain runs to 472 residues: Probable serine/threonine-protein kinase At1g01540 (472 aa).

A helical membrane pass occupies residues 24–44; it reads LWVVIGILLGSLIVIALFLLS. Residues Thr-67 and Thr-143 each carry the phosphothreonine modification. A Protein kinase domain is found at 154–431; it reads LCEENVIGEG…IHMLEAEDLL (278 aa). ATP contacts are provided by residues 160–168 and Lys-182; that span reads IGEGGYGIV. Phosphotyrosine is present on Tyr-227. Catalysis depends on Asp-280, which acts as the Proton acceptor. Phosphoserine is present on Ser-284. Residues Thr-314 and Thr-319 each carry the phosphothreonine modification. Tyr-327 bears the Phosphotyrosine mark. Positions 437 to 449 are enriched in basic and acidic residues; the sequence is RTTRDHGSRERQE. The interval 437–472 is disordered; the sequence is RTTRDHGSRERQETAVVAAGSESGESGSRHHQQKQR. Residues 451–462 are compositionally biased toward low complexity; that stretch reads AVVAAGSESGES.

It belongs to the protein kinase superfamily. Ser/Thr protein kinase family.

The protein localises to the membrane. It carries out the reaction L-seryl-[protein] + ATP = O-phospho-L-seryl-[protein] + ADP + H(+). The enzyme catalyses L-threonyl-[protein] + ATP = O-phospho-L-threonyl-[protein] + ADP + H(+). The protein is Probable serine/threonine-protein kinase At1g01540 of Arabidopsis thaliana (Mouse-ear cress).